The sequence spans 131 residues: Large ribosomal subunit protein bL17 (131 aa).

Belongs to the bacterial ribosomal protein bL17 family. In terms of assembly, part of the 50S ribosomal subunit. Contacts protein L32.

This chain is Large ribosomal subunit protein bL17, found in Shewanella amazonensis (strain ATCC BAA-1098 / SB2B).